Here is a 716-residue protein sequence, read N- to C-terminus: Fatty acid oxidation complex subunit alpha (716 aa).

The enoyl-CoA hydratase/isomerase stretch occupies residues 1–188 (MIYQSPTIQV…KVGAIDAVVA (188 aa)). Asp295 is a binding site for substrate. Residues 310-716 (KDIKHAAVLG…SNNGSYYPKA (407 aa)) are 3-hydroxyacyl-CoA dehydrogenase. NAD(+)-binding positions include Met323, Asp342, 399–401 (VVE), Lys406, and Ser428. His449 acts as the For 3-hydroxyacyl-CoA dehydrogenase activity in catalysis. Asn452 contributes to the NAD(+) binding site. Positions 499 and 659 each coordinate substrate.

This sequence in the N-terminal section; belongs to the enoyl-CoA hydratase/isomerase family. The protein in the C-terminal section; belongs to the 3-hydroxyacyl-CoA dehydrogenase family. As to quaternary structure, heterotetramer of two alpha chains (FadB) and two beta chains (FadA).

It carries out the reaction a (3S)-3-hydroxyacyl-CoA + NAD(+) = a 3-oxoacyl-CoA + NADH + H(+). The enzyme catalyses a (3S)-3-hydroxyacyl-CoA = a (2E)-enoyl-CoA + H2O. It catalyses the reaction a 4-saturated-(3S)-3-hydroxyacyl-CoA = a (3E)-enoyl-CoA + H2O. The catalysed reaction is (3S)-3-hydroxybutanoyl-CoA = (3R)-3-hydroxybutanoyl-CoA. It carries out the reaction a (3Z)-enoyl-CoA = a 4-saturated (2E)-enoyl-CoA. The enzyme catalyses a (3E)-enoyl-CoA = a 4-saturated (2E)-enoyl-CoA. The protein operates within lipid metabolism; fatty acid beta-oxidation. In terms of biological role, involved in the aerobic and anaerobic degradation of long-chain fatty acids via beta-oxidation cycle. Catalyzes the formation of 3-oxoacyl-CoA from enoyl-CoA via L-3-hydroxyacyl-CoA. It can also use D-3-hydroxyacyl-CoA and cis-3-enoyl-CoA as substrate. The polypeptide is Fatty acid oxidation complex subunit alpha (Shewanella amazonensis (strain ATCC BAA-1098 / SB2B)).